We begin with the raw amino-acid sequence, 356 residues long: Protein RecA (356 aa).

Residue 67-74 participates in ATP binding; that stretch reads GPESSGKT.

It belongs to the RecA family.

It is found in the cytoplasm. Can catalyze the hydrolysis of ATP in the presence of single-stranded DNA, the ATP-dependent uptake of single-stranded DNA by duplex DNA, and the ATP-dependent hybridization of homologous single-stranded DNAs. It interacts with LexA causing its activation and leading to its autocatalytic cleavage. The polypeptide is Protein RecA (Yersinia pseudotuberculosis serotype I (strain IP32953)).